The chain runs to 362 residues: tRNA-specific 2-thiouridylase MnmA (362 aa).

ATP contacts are provided by residues 13–20 (GLSGGVDS) and M39. The tract at residues 99–101 (NPD) is interaction with target base in tRNA. The active-site Nucleophile is C104. C104 and C200 are joined by a disulfide. G128 contributes to the ATP binding site. An interaction with tRNA region spans residues 150–152 (KDQ). The active-site Cysteine persulfide intermediate is C200.

Belongs to the MnmA/TRMU family.

The protein resides in the cytoplasm. The enzyme catalyses S-sulfanyl-L-cysteinyl-[protein] + uridine(34) in tRNA + AH2 + ATP = 2-thiouridine(34) in tRNA + L-cysteinyl-[protein] + A + AMP + diphosphate + H(+). Catalyzes the 2-thiolation of uridine at the wobble position (U34) of tRNA, leading to the formation of s(2)U34. The sequence is that of tRNA-specific 2-thiouridylase MnmA from Coxiella burnetii (strain RSA 493 / Nine Mile phase I).